Here is a 333-residue protein sequence, read N- to C-terminus: Large ribosomal subunit protein mL44 (333 aa).

The N-terminal 30 residues, 1 to 30 (MASAVFRLLQQGPRRLLAPAVPTLAPPVRG), are a transit peptide targeting the mitochondrion. The region spanning 86–228 (DLLKTAFINS…LITQMTGKEL (143 aa)) is the RNase III domain. Residues 236–306 (NPMGLLVEEL…ARVALRKLYG (71 aa)) enclose the DRBM domain. Positions 311–327 (RRPWDYSKPKESPKRAE) are enriched in basic and acidic residues. Residues 311–333 (RRPWDYSKPKESPKRAEQTSVAS) form a disordered region.

This sequence belongs to the ribonuclease III family. Mitochondrion-specific ribosomal protein mL44 subfamily. In terms of assembly, component of the mitochondrial ribosome large subunit (39S) which comprises a 16S rRNA and about 50 distinct proteins.

It is found in the mitochondrion. In terms of biological role, component of the 39S subunit of mitochondrial ribosome. May have a function in the assembly/stability of nascent mitochondrial polypeptides exiting the ribosome. The protein is Large ribosomal subunit protein mL44 (Mrpl44) of Mus musculus (Mouse).